The primary structure comprises 289 residues: MTLRKQRQEIYYEFTSSSFEITSPPESSKITLTNLYPILVRPYVPAVIPLGIRIIYGNKGQGFILAGSSQKKVFCHTGLIDPGYRGEIKLIVLNTTKYNVTLFAGELRVSLFSFFFSTPIIYDYDLLNRPQYSDDAGYDLYLQEDLMLFPQASTTVTIDSRVPTTTKFFKPVVFGRSGLATRGVVVDVVKWTHSPLTLKIYNFTDNTLRYSAGTRICQVVFVHRRHFPSKLKHFFTYINLNSKTSFYWANVSFVDCQNDAYRSLVTLPCQEDTDRGYRGDSGFGSSGMR.

Residues 176–178 (RSG) and 283–284 (FG) each bind substrate.

Belongs to the dUTPase family. The cofactor is Mg(2+).

It catalyses the reaction dUTP + H2O = dUMP + diphosphate + H(+). Its function is as follows. Involved in nucleotide metabolism: produces dUMP, the immediate precursor of thymidine nucleotides and decreases the intracellular concentration of dUTP to avoid uracil incorporation into viral DNA. This is Deoxyuridine 5'-triphosphate nucleotidohydrolase from Equus caballus (Horse).